The primary structure comprises 692 residues: Elongation factor G 2 (692 aa).

A tr-type G domain is found at 8–283; the sequence is EKTRNIGIMA…AVIDYMPSPV (276 aa). Residues 17–24, 81–85, and 135–138 contribute to the GTP site; these read AHIDAGKT, DTPGH, and NKMD.

This sequence belongs to the TRAFAC class translation factor GTPase superfamily. Classic translation factor GTPase family. EF-G/EF-2 subfamily.

Its subcellular location is the cytoplasm. Its function is as follows. Catalyzes the GTP-dependent ribosomal translocation step during translation elongation. During this step, the ribosome changes from the pre-translocational (PRE) to the post-translocational (POST) state as the newly formed A-site-bound peptidyl-tRNA and P-site-bound deacylated tRNA move to the P and E sites, respectively. Catalyzes the coordinated movement of the two tRNA molecules, the mRNA and conformational changes in the ribosome. The chain is Elongation factor G 2 from Syntrophotalea carbinolica (strain DSM 2380 / NBRC 103641 / GraBd1) (Pelobacter carbinolicus).